Here is a 517-residue protein sequence, read N- to C-terminus: ATP synthase subunit alpha (517 aa).

174 to 181 is a binding site for ATP; sequence GDRQTGKT.

Belongs to the ATPase alpha/beta chains family. F-type ATPases have 2 components, CF(1) - the catalytic core - and CF(0) - the membrane proton channel. CF(1) has five subunits: alpha(3), beta(3), gamma(1), delta(1), epsilon(1). CF(0) has three main subunits: a(1), b(2) and c(9-12). The alpha and beta chains form an alternating ring which encloses part of the gamma chain. CF(1) is attached to CF(0) by a central stalk formed by the gamma and epsilon chains, while a peripheral stalk is formed by the delta and b chains.

The protein localises to the cell inner membrane. The catalysed reaction is ATP + H2O + 4 H(+)(in) = ADP + phosphate + 5 H(+)(out). Its function is as follows. Produces ATP from ADP in the presence of a proton gradient across the membrane. The alpha chain is a regulatory subunit. The polypeptide is ATP synthase subunit alpha (Variovorax paradoxus (strain S110)).